Consider the following 461-residue polypeptide: uncharacterized protein (461 aa).

Residues 1–19 are compositionally biased toward basic and acidic residues; the sequence is MEKCSHESGRHSAENDGKY. The interval 1–21 is disordered; that stretch reads MEKCSHESGRHSAENDGKYDI.

It belongs to the CapA family.

Could be involved in the biosynthesis of a cell wall component. This is an uncharacterized protein from Sinorhizobium fredii (strain NBRC 101917 / NGR234).